A 359-amino-acid chain; its full sequence is Cyclic AMP response element-binding protein B (359 aa).

Disordered stretches follow at residues 1–73 (MDNS…AQGG) and 185–238 (VRNK…FTEI). Residues 9 to 32 (NGNSSAASGSNDVVDVVAQQAAAA) are compositionally biased toward low complexity. A compositionally biased stretch (gly residues) spans 33 to 47 (VGGGGGGGGGGGGGN). Positions 48–70 (PQQQQQNPQSTTAGGPTGATNNA) are enriched in low complexity. Residues 198 to 257 (KPEPNTQHPEDSDESLSDDDSQHHRSELTRRPSYNKIFTEISGPDMSGASLPMSDGVLNS) enclose the KID domain. Residues Ser-209, Ser-212, and Ser-214 each carry the phosphoserine modification. Residues 217–227 (DSQHHRSELTR) are compositionally biased toward basic and acidic residues. In terms of domain architecture, bZIP spans 300-359 (TRKREIRLQKNREAARECRRKKKEYIKCLENRVAVLENQNKALIEELKSLKELYCQTKND). The segment at 301–326 (RKREIRLQKNREAARECRRKKKEYIK) is basic motif. The interval 328-349 (LENRVAVLENQNKALIEELKSL) is leucine-zipper.

Belongs to the bZIP family. ATF subfamily. Homodimer. As to expression, most cells of the adult brain; cell bodies, but not neuropil.

The protein resides in the nucleus. Isoform E is a PKA-dependent transcriptional activator. Isoform J is a direct antagonist of activation by isoform E in cell culture. Binds the cAMP response element (CRE) (consensus: 5'-GTGACGT[AC][AG]-3'), a sequence present in many viral and cellular promoters. Has a role in long-term memory. In Drosophila melanogaster (Fruit fly), this protein is Cyclic AMP response element-binding protein B.